The following is a 130-amino-acid chain: Lipoprotein LpqS (130 aa).

The signal sequence occupies residues 1–23 (MVWMRSAIVAVALGVTVAAVAAA). Cysteine 24 carries the N-palmitoyl cysteine lipid modification. Cysteine 24 is lipidated: S-diacylglycerol cysteine.

The protein localises to the cell membrane. Functionally, may play an essential role in M.tuberculosis replication and survival inside the host cell. The sequence is that of Lipoprotein LpqS from Mycobacterium tuberculosis (strain ATCC 25618 / H37Rv).